We begin with the raw amino-acid sequence, 33 residues long: Gastrin (33 aa).

A disordered region spans residues 1 to 21; that stretch reads ELEPQGPPHLGTDLSKKQGPW. Position 18 is a pyrrolidone carboxylic acid (Gln18). Tyr28 is modified (sulfotyrosine). Phenylalanine amide is present on Phe33.

The protein belongs to the gastrin/cholecystokinin family.

The protein localises to the secreted. Gastrin stimulates the stomach mucosa to produce and secrete hydrochloric acid and the pancreas to secrete its digestive enzymes. It also stimulates smooth muscle contraction and increases blood circulation and water secretion in the stomach and intestine. The protein is Gastrin (GAST) of Chinchilla chinchilla (Short-tailed chinchilla).